Consider the following 205-residue polypeptide: Small ribosomal subunit protein uS4 (205 aa).

Positions 18 to 49 (NIWGRPKSPVNKREYGPGQHGQRRKGKLSDFG) are disordered. In terms of domain architecture, S4 RNA-binding spans 94-157 (RRLDAIVYRA…KQLALVLEAN (64 aa)).

Belongs to the universal ribosomal protein uS4 family. As to quaternary structure, part of the 30S ribosomal subunit. Contacts protein S5. The interaction surface between S4 and S5 is involved in control of translational fidelity.

Its function is as follows. One of the primary rRNA binding proteins, it binds directly to 16S rRNA where it nucleates assembly of the body of the 30S subunit. Functionally, with S5 and S12 plays an important role in translational accuracy. In Afipia carboxidovorans (strain ATCC 49405 / DSM 1227 / KCTC 32145 / OM5) (Oligotropha carboxidovorans), this protein is Small ribosomal subunit protein uS4.